The primary structure comprises 454 residues: Bifunctional protein GlmU (454 aa).

The segment at 1-227 is pyrophosphorylase; it reads MSKLSVVILA…MMEVEGANNR (227 aa). UDP-N-acetyl-alpha-D-glucosamine-binding positions include 9 to 12, Lys-23, Gln-74, 79 to 80, 101 to 103, Gly-138, Glu-152, Asn-167, and Asn-225; these read LAAG, GT, and YGD. Asp-103 serves as a coordination point for Mg(2+). Asn-225 serves as a coordination point for Mg(2+). The interval 228-248 is linker; the sequence is LQLAALERYFQRKQATALLLA. An N-acetyltransferase region spans residues 249–454; the sequence is GVSLADPERF…ADWERPSKKK (206 aa). UDP-N-acetyl-alpha-D-glucosamine-binding residues include Arg-331 and Lys-349. The Proton acceptor role is filled by His-361. Residues Tyr-364 and Asn-375 each coordinate UDP-N-acetyl-alpha-D-glucosamine. Residues Ala-378, 384–385, Ser-403, Ala-421, and Arg-438 contribute to the acetyl-CoA site; that span reads NY.

The protein in the N-terminal section; belongs to the N-acetylglucosamine-1-phosphate uridyltransferase family. It in the C-terminal section; belongs to the transferase hexapeptide repeat family. Homotrimer. Requires Mg(2+) as cofactor.

It localises to the cytoplasm. The enzyme catalyses alpha-D-glucosamine 1-phosphate + acetyl-CoA = N-acetyl-alpha-D-glucosamine 1-phosphate + CoA + H(+). It carries out the reaction N-acetyl-alpha-D-glucosamine 1-phosphate + UTP + H(+) = UDP-N-acetyl-alpha-D-glucosamine + diphosphate. Its pathway is nucleotide-sugar biosynthesis; UDP-N-acetyl-alpha-D-glucosamine biosynthesis; N-acetyl-alpha-D-glucosamine 1-phosphate from alpha-D-glucosamine 6-phosphate (route II): step 2/2. The protein operates within nucleotide-sugar biosynthesis; UDP-N-acetyl-alpha-D-glucosamine biosynthesis; UDP-N-acetyl-alpha-D-glucosamine from N-acetyl-alpha-D-glucosamine 1-phosphate: step 1/1. It functions in the pathway bacterial outer membrane biogenesis; LPS lipid A biosynthesis. In terms of biological role, catalyzes the last two sequential reactions in the de novo biosynthetic pathway for UDP-N-acetylglucosamine (UDP-GlcNAc). The C-terminal domain catalyzes the transfer of acetyl group from acetyl coenzyme A to glucosamine-1-phosphate (GlcN-1-P) to produce N-acetylglucosamine-1-phosphate (GlcNAc-1-P), which is converted into UDP-GlcNAc by the transfer of uridine 5-monophosphate (from uridine 5-triphosphate), a reaction catalyzed by the N-terminal domain. The protein is Bifunctional protein GlmU of Actinobacillus succinogenes (strain ATCC 55618 / DSM 22257 / CCUG 43843 / 130Z).